A 389-amino-acid chain; its full sequence is Putative RNA methyltransferase R405 (389 aa).

Residues glutamine 207, aspartate 261, and aspartate 314 each contribute to the S-adenosyl-L-methionine site. Cysteine 342 (nucleophile) is an active-site residue.

Belongs to the class I-like SAM-binding methyltransferase superfamily. RNA M5U methyltransferase family.

The polypeptide is Putative RNA methyltransferase R405 (Acanthamoeba polyphaga (Amoeba)).